The primary structure comprises 125 residues: Cu-Zn superoxide dismutase-like protein OPG175 (125 aa).

A disulfide bridge connects residues Cys-52 and Cys-102.

The protein belongs to the Cu-Zn superoxide dismutase family.

The protein resides in the virion. It localises to the host cytoplasm. In terms of biological role, superoxide dismutase-like protein with no enzymatic activity. The protein is Cu-Zn superoxide dismutase-like protein OPG175 (OPG175) of Cowpox virus (strain Brighton Red) (CPV).